The primary structure comprises 189 residues: Peptidyl-tRNA hydrolase (189 aa).

Position 15 (tyrosine 15) interacts with tRNA. The active-site Proton acceptor is histidine 20. TRNA-binding residues include phenylalanine 66, asparagine 68, and asparagine 114.

It belongs to the PTH family. Monomer.

It localises to the cytoplasm. The catalysed reaction is an N-acyl-L-alpha-aminoacyl-tRNA + H2O = an N-acyl-L-amino acid + a tRNA + H(+). Its function is as follows. Hydrolyzes ribosome-free peptidyl-tRNAs (with 1 or more amino acids incorporated), which drop off the ribosome during protein synthesis, or as a result of ribosome stalling. Functionally, catalyzes the release of premature peptidyl moieties from peptidyl-tRNA molecules trapped in stalled 50S ribosomal subunits, and thus maintains levels of free tRNAs and 50S ribosomes. This Streptococcus thermophilus (strain CNRZ 1066) protein is Peptidyl-tRNA hydrolase.